The primary structure comprises 355 residues: 5-formaminoimidazole-4-carboxamide-1-(beta)-D-ribofuranosyl 5'-monophosphate synthetase (355 aa).

Residues His-27 and Ser-94 each coordinate 5-amino-1-(5-phospho-beta-D-ribosyl)imidazole-4-carboxamide. The 232-residue stretch at 101 to 332 (TESFAELAVP…YSDMIEENLS (232 aa)) folds into the ATP-grasp domain. Residues 144–195 (PEKI…TRYY) and Glu-225 contribute to the ATP site. 5-amino-1-(5-phospho-beta-D-ribosyl)imidazole-4-carboxamide is bound at residue Asn-254. Mg(2+) contacts are provided by Glu-292 and Glu-305.

This sequence belongs to the phosphohexose mutase family. The cofactor is Mg(2+). Mn(2+) serves as cofactor.

It carries out the reaction 5-amino-1-(5-phospho-beta-D-ribosyl)imidazole-4-carboxamide + formate + ATP = 5-formamido-1-(5-phospho-D-ribosyl)imidazole-4-carboxamide + ADP + phosphate. It participates in purine metabolism; IMP biosynthesis via de novo pathway; 5-formamido-1-(5-phospho-D-ribosyl)imidazole-4-carboxamide from 5-amino-1-(5-phospho-D-ribosyl)imidazole-4-carboxamide (formate route): step 1/1. In terms of biological role, catalyzes the ATP- and formate-dependent formylation of 5-aminoimidazole-4-carboxamide-1-beta-d-ribofuranosyl 5'-monophosphate (AICAR) to 5-formaminoimidazole-4-carboxamide-1-beta-d-ribofuranosyl 5'-monophosphate (FAICAR) in the absence of folates. This Methanococcoides burtonii (strain DSM 6242 / NBRC 107633 / OCM 468 / ACE-M) protein is 5-formaminoimidazole-4-carboxamide-1-(beta)-D-ribofuranosyl 5'-monophosphate synthetase.